The chain runs to 194 residues: Imidazoleglycerol-phosphate dehydratase (194 aa).

This sequence belongs to the imidazoleglycerol-phosphate dehydratase family.

The protein resides in the cytoplasm. The catalysed reaction is D-erythro-1-(imidazol-4-yl)glycerol 3-phosphate = 3-(imidazol-4-yl)-2-oxopropyl phosphate + H2O. The protein operates within amino-acid biosynthesis; L-histidine biosynthesis; L-histidine from 5-phospho-alpha-D-ribose 1-diphosphate: step 6/9. This chain is Imidazoleglycerol-phosphate dehydratase, found in Thermoanaerobacter pseudethanolicus (strain ATCC 33223 / 39E) (Clostridium thermohydrosulfuricum).